We begin with the raw amino-acid sequence, 1118 residues long: Sodium-driven chloride bicarbonate exchanger (1118 aa).

4 disordered regions span residues methionine 1 to valine 23, glycine 58 to serine 96, lysine 245 to glutamine 312, and asparagine 457 to leucine 476. Residues methionine 1–cysteine 509 lie on the Cytoplasmic side of the membrane. Positions arginine 59–aspartate 76 are enriched in basic residues. A compositionally biased stretch (basic and acidic residues) spans arginine 77 to proline 90. Residue serine 89 is modified to Phosphoserine. Threonine 94 is subject to Phosphothreonine. Positions glutamate 248–serine 264 are enriched in polar residues. Serine 276 is modified (phosphoserine). The chain crosses the membrane as a helical span at residues leucine 510–leucine 530. Residues leucine 531 to arginine 538 lie on the Extracellular side of the membrane. The helical transmembrane segment at isoleucine 539 to glycine 559 threads the bilayer. Topologically, residues glycine 560 to proline 562 are cytoplasmic. A helical membrane pass occupies residues leucine 563–cysteine 583. At lysine 584–serine 596 the chain is on the extracellular side. Residues isoleucine 597–valine 617 traverse the membrane as a helical segment. At cysteine 618–glutamate 626 the chain is on the cytoplasmic side. Residues alanine 627–leucine 647 traverse the membrane as a helical segment. The Extracellular segment spans residues serine 648–proline 720. Residues asparagine 674, asparagine 677, asparagine 687, and asparagine 697 are each glycosylated (N-linked (GlcNAc...) asparagine). The helical transmembrane segment at tyrosine 721 to alanine 741 threads the bilayer. Residues threonine 742–aspartate 762 lie on the Cytoplasmic side of the membrane. Residues phenylalanine 763 to serine 783 traverse the membrane as a helical segment. The Extracellular portion of the chain corresponds to proline 784–asparagine 809. A helical membrane pass occupies residues proline 810 to methionine 830. Over aspartate 831–aspartate 855 the chain is Cytoplasmic. The chain crosses the membrane as a helical span at residues leucine 856 to alanine 876. Residues alanine 877 to threonine 912 lie on the Extracellular side of the membrane. The chain crosses the membrane as a helical span at residues glycine 913–isoleucine 933. Over proline 934–methionine 935 the chain is Cytoplasmic. The chain crosses the membrane as a helical span at residues proline 936 to phenylalanine 956. The Extracellular segment spans residues aspartate 957–tryptophan 998. Residues isoleucine 999–valine 1019 form a helical membrane-spanning segment. The Cytoplasmic portion of the chain corresponds to arginine 1020–serine 1118. A phosphoserine mark is found at serine 1057 and serine 1085.

Belongs to the anion exchanger (TC 2.A.31) family. Predominantly expressed in the brain.

The protein localises to the basolateral cell membrane. It localises to the apical cell membrane. Its subcellular location is the cell projection. It is found in the dendrite. The protein resides in the axon. The protein localises to the perikaryon. It localises to the presynapse. Its subcellular location is the postsynapse. It carries out the reaction 2 hydrogencarbonate(out) + chloride(in) + Na(+)(out) = 2 hydrogencarbonate(in) + chloride(out) + Na(+)(in). Sodium/bicarbonate cotransporter which plays an important role in regulating intracellular pH. Has been shown to act as a sodium/bicarbonate cotransporter in exchange for intracellular chloride. Has also been shown to act as a sodium/biocarbonate cotransporter which does not couple net influx of bicarbonate to net efflux of chloride, with the observed chloride efflux being due to chloride self-exchange. Controls neuronal pH and may contribute to the secretion of cerebrospinal fluid. Acting on presynaptic intracellular pH, it promotes GABA release, reduces the excitability of CA1 pyramidal neurons, and modulates short-term synaptic plasticity. Required in retinal cells to maintain normal pH which is necessary for normal vision. In the kidney, likely to mediate bicarbonate reclamation in the apical membrane of the proximal tubules. The chain is Sodium-driven chloride bicarbonate exchanger from Homo sapiens (Human).